A 240-amino-acid chain; its full sequence is Small ribosomal subunit protein uS2 (240 aa).

This sequence belongs to the universal ribosomal protein uS2 family.

The protein is Small ribosomal subunit protein uS2 of Haemophilus influenzae (strain 86-028NP).